Consider the following 35-residue polypeptide: FECSISCEIEKKGESCKPKKCKGGWKCKFNMCVKV.

Disulfide bonds link cysteine 3–cysteine 16, cysteine 7–cysteine 27, and cysteine 21–cysteine 32.

The protein belongs to the neurotoxin 12 (Hwtx-2) family. 02 (Hwtx-2) subfamily. In terms of tissue distribution, expressed by the venom gland.

The protein resides in the secreted. In terms of biological role, blocks neuromuscular transmission. Acts cooperatively to potentiate the activity of huwentoxin-I. Paralyzes locusts and kills mice following intracerebroventricular injection. The protein is U1-theraphotoxin-Hs1f of Cyriopagopus schmidti (Chinese bird spider).